The primary structure comprises 199 residues: Small ribosomal subunit protein uS4 (199 aa).

The S4 RNA-binding domain occupies 94 to 157 (SRLDNIVYRM…QNVPTILASI (64 aa)).

This sequence belongs to the universal ribosomal protein uS4 family. As to quaternary structure, part of the 30S ribosomal subunit. Contacts protein S5. The interaction surface between S4 and S5 is involved in control of translational fidelity.

One of the primary rRNA binding proteins, it binds directly to 16S rRNA where it nucleates assembly of the body of the 30S subunit. Functionally, with S5 and S12 plays an important role in translational accuracy. This Mycoplasma mobile (strain ATCC 43663 / 163K / NCTC 11711) (Mesomycoplasma mobile) protein is Small ribosomal subunit protein uS4.